The chain runs to 248 residues: NH(3)-dependent NAD(+) synthetase (248 aa).

30-37 (GLSGGIDS) contacts ATP. Asp-36 is a Mg(2+) binding site. Arg-114 serves as a coordination point for deamido-NAD(+). Thr-134 is an ATP binding site. Glu-139 lines the Mg(2+) pocket. Positions 147 and 154 each coordinate deamido-NAD(+). Residues Lys-163 and Thr-185 each coordinate ATP. A deamido-NAD(+)-binding site is contributed by 232–233 (HK).

This sequence belongs to the NAD synthetase family. In terms of assembly, homodimer.

It carries out the reaction deamido-NAD(+) + NH4(+) + ATP = AMP + diphosphate + NAD(+) + H(+). It participates in cofactor biosynthesis; NAD(+) biosynthesis; NAD(+) from deamido-NAD(+) (ammonia route): step 1/1. Catalyzes the ATP-dependent amidation of deamido-NAD to form NAD. Uses ammonia as a nitrogen source. In Mycoplasma genitalium (strain ATCC 33530 / DSM 19775 / NCTC 10195 / G37) (Mycoplasmoides genitalium), this protein is NH(3)-dependent NAD(+) synthetase.